The primary structure comprises 438 residues: MTLTDLETCAEEIATAARTLARDGHSGGYSAGLPDHLRAVQRTLIANASQVLALASQPADLVRQLALYNQLLACLRWLGEFQVLACIPLDESVPFEDVADIAGVPECRLRRLVRPLFTIGFLCEPSPGHVAHSVLSKQFVTQPALLDAILFMSETLAPSASAMGTQTRRFGASEQAGDSAWNMAVGSDSPFAACLQQRPKVKRQLGAYLSYVSSAIDAGVEDTLTRMNWQNLGMATVVHVGAQSPSLVVALAPQFPSLRFLVQTEAKAESGGHQPCLDNHGIPALKLASIPLHLRARITWGTRLSTATQPVLDAAVYLISIPFPSPQSPAMEITMRVAQALKAHVEVLRNNSDARLILTLPMSSATRSMDAAARAAVSLSDLSLLQLTNGGSLNMGEIRDLLRSRSDGLVVMREVRSPTNAVIAFEIQYRVDNDDNRY.

An HTH iclR-type domain is found at 65–134 (LALYNQLLAC…PSPGHVAHSV (70 aa)). Positions 95-114 (FEDVADIAGVPECRLRRLVR) form a DNA-binding region, H-T-H motif.

Interacts with aflR.

It is found in the nucleus. Its subcellular location is the endosome. In terms of biological role, transcription coactivator involved in regulation of the aflatoxin biosynthesis gene cluster with aflR. The ratio of the expression data between aflS:aflR plays a crucial role in the regulation of aflatoxins production. A high ratio, produced at a range between 17 and 30 degrees Celsius, corresponds with the production profile of aflatoxin G1 biosynthesis. A low ratio, produced over 30 degrees Celsius, is related to aflatoxin B1 biosynthesis. AflJ may act in aflR transport to or from the nucleus, thus controlling the availability of aflR for transcriptional activation of aflatoxin biosynthesis cluster genes. AflJ may also assist in directing endosomes to the cytoplasmic membrane for aflatoxin export. The polypeptide is Aflatoxin cluster transcriptional coactivator aflS (Aspergillus parasiticus (strain ATCC 56775 / NRRL 5862 / SRRC 143 / SU-1)).